The following is a 185-amino-acid chain: Large ribosomal subunit protein bL25 (185 aa).

It belongs to the bacterial ribosomal protein bL25 family. CTC subfamily. In terms of assembly, part of the 50S ribosomal subunit; part of the 5S rRNA/L5/L18/L25 subcomplex. Contacts the 5S rRNA. Binds to the 5S rRNA independently of L5 and L18.

This is one of the proteins that binds to the 5S RNA in the ribosome where it forms part of the central protuberance. This is Large ribosomal subunit protein bL25 from Microcystis aeruginosa (strain NIES-843 / IAM M-2473).